A 442-amino-acid chain; its full sequence is MSYCPNTPEDIREMLAAIGVASVDALFAPIPAGLRARSFALPDGTSEQELLRQMKQLAGTDRPVTGFIGGGYYDHYIPAVVDHLSGRAEFYTAYTPYQPECSQGTLQALFEYQTAICRLTGMEVSNASLYDGGTALAEAAMMALRVTGRNRLVIDGSVNPFSREIVRTYLTNLGVEIVEIPARDGLADRPALTAALTDLTAAVILQNPNFFGSVEDLSDIALTAHANGALLIASVYPISLGLVKSPGAMGADIVVGDGQSLGNPLSFGGPSFGFIATTKKYIRNLPGRIIGETVDKSGRRGFVLTLQAREQHIKRHKATSNICSNQSLCALRGMIFLASVGKEGLVDLARLNRDKAEYAKGLLGSIKGVKLLNTAPTFNEFTIVLPKDAAEVAERLLGKGVAAGVPLGAYYHGMDNCLVVTVTEKRTRDEIDALAKELEGAL.

It belongs to the GcvP family. N-terminal subunit subfamily. As to quaternary structure, the glycine cleavage system is composed of four proteins: P, T, L and H. In this organism, the P 'protein' is a heterodimer of two subunits.

It carries out the reaction N(6)-[(R)-lipoyl]-L-lysyl-[glycine-cleavage complex H protein] + glycine + H(+) = N(6)-[(R)-S(8)-aminomethyldihydrolipoyl]-L-lysyl-[glycine-cleavage complex H protein] + CO2. Its function is as follows. The glycine cleavage system catalyzes the degradation of glycine. The P protein binds the alpha-amino group of glycine through its pyridoxal phosphate cofactor; CO(2) is released and the remaining methylamine moiety is then transferred to the lipoamide cofactor of the H protein. The polypeptide is Probable glycine dehydrogenase (decarboxylating) subunit 1 (Geotalea uraniireducens (strain Rf4) (Geobacter uraniireducens)).